Here is a 123-residue protein sequence, read N- to C-terminus: Putative iron-sulfur cluster insertion protein ErpA (123 aa).

Iron-sulfur cluster is bound by residues Cys-51, Cys-115, and Cys-117.

It belongs to the HesB/IscA family. In terms of assembly, homodimer. It depends on iron-sulfur cluster as a cofactor.

Functionally, required for insertion of 4Fe-4S clusters. The protein is Putative iron-sulfur cluster insertion protein ErpA of Burkholderia multivorans (strain ATCC 17616 / 249).